The primary structure comprises 286 residues: MISSKTSFIALIGNPVSHSFSPIMQNAAFQYLGLDLIYFAIPCKDEDLELVLNSLKKINCKGLNITIPHKEKVFNLCSEISPIARKLKAINTLKLNSENEWSATNTDLEGFIYPLKNLNLAKKKSIVLGSGGAAKSVIQGLINLNLSKISVIGRNKSSLDELIKNFGNQIELHSFLSNDNQTQNLIEEADLIINTTPVGMKTAKNEMNLLPYGDYFWRSLNSKTIVYDLIYNPAPTHLLKFSANKGCMTIDGLQMLVAQGLKSLSFWTNGLEVPFHIMNDALKNHL.

Shikimate is bound by residues 19–21 (SFS) and Thr66. Residue Lys70 is the Proton acceptor of the active site. Residues Asn91 and Asp107 each coordinate shikimate. NADP(+) contacts are provided by residues 129–133 (GSGGA) and Leu229. Residue Tyr231 coordinates shikimate. Gly252 serves as a coordination point for NADP(+).

It belongs to the shikimate dehydrogenase family. Homodimer.

It catalyses the reaction shikimate + NADP(+) = 3-dehydroshikimate + NADPH + H(+). It functions in the pathway metabolic intermediate biosynthesis; chorismate biosynthesis; chorismate from D-erythrose 4-phosphate and phosphoenolpyruvate: step 4/7. Its function is as follows. Involved in the biosynthesis of the chorismate, which leads to the biosynthesis of aromatic amino acids. Catalyzes the reversible NADPH linked reduction of 3-dehydroshikimate (DHSA) to yield shikimate (SA). The chain is Shikimate dehydrogenase (NADP(+)) from Prochlorococcus marinus (strain MIT 9301).